A 125-amino-acid chain; its full sequence is Protein MGF 360-9L (125 aa).

The protein belongs to the asfivirus MGF 360 family. In terms of assembly, interacts with host STAT1; this interaction mediates STAT1 degradation through apoptosis. Interacts with host STAT2; this interaction mediates STAT2 degradation through the proteasome.

Its subcellular location is the host cytoplasm. Its function is as follows. Plays a role in virus cell tropism, and may be required for efficient virus replication in macrophages. In addition, inhibits IFN-beta-induced IFN-stimulated genes (ISGs) transcription. Mechanistically, degrades host STAT1 and STAT2 through apoptosis and ubiquitin-proteasome pathways respectively. The polypeptide is Protein MGF 360-9L (African swine fever virus (strain Badajoz 1971 Vero-adapted) (Ba71V)).